The primary structure comprises 2327 residues: MNTTDCFIAVVNAIREIRALFLPRTTGKMEFTLHDGEKKVFYSRPNNHDNCWLNTILQLFRYVDEPFFDWVYNSPENLTLEAIKQLEELTGLELREGGPPALVIWNIKHLLHTGIGTASRPSEVCMVDGTDMCLADFHAGIFMKGQEHAVFACVTSNGWYAIDDEDFYPWTPDPSDVLVFVPYDQEPLNEGWKANVQRKLKGAGQSSPATGSQNQSGNTGSIINNYYMQQYQNSMDTQLGDNAISGGSNEGSTDTTSTHTTNTQNNDWFSKLASSAFSGLFGALLADKKTEETTLLEDRILTTRNGHTTSTTQSSVGVTFGYATAEDSTSGPNTSGLETRVHQAERFFKMALFDWVPSQNFGHMHKVVLPHEPKGVYGGLVKSYAYMRNGWDVEVTAVGNQFNGGCLLVALVPEMGDISDREKYQLTLYPHQFINPRTNMTAHITVPYVGVNRYDQYKQHRPWTLVVMVVAPLTTNTAGAQQIKVYANIAPTNVHVAGELPSKEGIFPVACSDGYGNMVTTDPKTADPAYGKVYNPPRTALPGRFTNYLDVAEACPTFLMFENVPYVSTRTDGQRLLAKFDVSLAAKHMSNTYLAGLAQYYTQYTGTINLHFMFTGPTDAKARYMVAYVPPGMDAPDNPEEAAHCIHAEWDTGLNSKFTFSIPYISAADYAYTASHEAETTCVQGWVCVYQITHGKADADALVVSASAGKDFELRLPVDARQQTTATGESADPVTTTVENYGGETQVQRRHHTDVAFVLDRFVKVTVSGNQHTLDVMQAHKDNIVGALLRAATYYFSDLEIAVTHTGKLTWVPNGAPVSALDNTTNPTAYHKGPLTRLALPYTAPHRVLATAYTGTTTYTASTRGDSAHLTATRARHLPTSFNFGAVKAETITELLVRMKRAELYCPRPILPIQPTGDRHKQPLVAPAKQLLNFDLLKLAGDVESNPGPFFFSDVRSNFSKLVETINQMQEDMSTKHGPDFNRLVSAFEELASGVKAIRTGLDEAKPWYKLIKLLSRLSCMAAVAARSKDPVLVAIMLADTGLEILDSTFVVKKISDSLSSLFHVPAPAFSFGAPILLAGLVKVASSFFRSTPEDLERAEKQLKARDINDIFAILKNGEWLVKLILAIRDWIKAWIASEEKFVTMTDLVPGILEKQRDLNDPSKYKDAKEWLDNTRQACLKSGNVHIANLCKVVAPAPSKSRPEPVVVCLRGKSGQGKSFLANVLAQAISTHLTGRTDSVWYCPPDPDHFDGYNQQTVVVMDDLGQNPDGKDFKYFAQMVSTTGFIPPMASLEDKGKPFSSKVIIATTNLYSGFTPKTMVCPDALNRRFHFDIDVSAKDGYKINNKLDIIKALEDTHTNPVAMFQYDCALLNGMAVEMKRLQQDMFKPQPPLQNVYQLVQEVIERVELHEKVSSHPIFKQISIPSQKSVLYFLIEKGQHEAAIEFFEGMVHDSIKEELRPLIQQTSFVKRAFKRLKENFEIVALCLTLLANIVIMIRETHKRQKMVDDAVNEYIEKANITTDDKTLDEAEKNPLETSGASTVGFRERTLPGQKARDDVNSEPAQPTEEQPQAEGPYAGPLERQRPLKVRAKLPQQEGPYAGPMERQKPLKVKARAPVVKEGPYEGPVKKPVALKVKAKNLIVTESGAPPTDLQKMVMGNTKPVELILDGKTVAICCATGVFGTAYLVPRHLFAEKYDKIMLDGRALTDSDYRVFEFEIKVKGQDMLSDAALMVLHRGNRVRDITKHFRDVARMKKGTPVVGVINNADVGRLIFSGEALTYKDIVVCMDGDTMPGLFAYKAATKAGYCGGAVLAKDGADTFIVGTHSAGGNGVGYCSCVSRSMLLKMKAHIDPEPHHEGLIVDTRDVEERVHVMRKTKLAPTVAHGVFNPEFGPAALSNKDPRLNEGVVLDEVIFSKHKGDTKMSEEDKALFRRCAADYASRLHSVLGTANAPLSIYEAIKGVDGLDAMEPDTAPGLPWALQGKRRGALIDFENGTVGPEVEAALKLMEKREYKFACQTFLKDEIRPMEKVRAGKTRIVDVLPVEHILYTRMMIGRFCAQMHSNNGPQIGSAVGCNPDVDWQRFGTHFAQYRNVWDVDYSAFDANHCSDAMNIMFEEVFRTEFGFHPNAEWILKTLVNTEHAYENKRITVEGGMPSGCSATSIINTILNNIYVLYALRRHYEGVELDTYTMISYGDDIVVASDYDLDFEALKPHFKSLGQTITPADKSDKGFVLGHSITDVTFLKRHFHMDYGTGFYKPVMASKTLEAILSFARRGTIQEKLISVAGLAVHSGPDEYRRLFEPFQGLFEIPSYRSLYLRWVNAVCGDA.

The 201-residue stretch at 1–201 (MNTTDCFIAV…WKANVQRKLK (201 aa)) folds into the Peptidase C28 domain. At 1 to 1475 (MNTTDCFIAV…SFVKRAFKRL (1475 aa)) the chain is on the cytoplasmic side. Residues cysteine 51, histidine 148, and aspartate 163 each act as for leader protease activity in the active site. Disordered stretches follow at residues 199-218 (KLKG…QSGN) and 238-265 (QLGD…NTQN). The N-myristoyl glycine; by host moiety is linked to residue glycine 202. 2 stretches are compositionally biased toward polar residues: residues 204 to 218 (GQSS…QSGN) and 238 to 251 (QLGD…SNEG). Low complexity predominate over residues 252–265 (STDTTSTHTTNTQN). The tract at residues 787 to 795 (ALLRAATYY) is antigenic epitope. Positions 864–866 (RGD) match the Cell attachment site motif. The SF3 helicase domain maps to 1184–1348 (NVHIANLCKV…DGYKINNKLD (165 aa)). 1212 to 1219 (GKSGQGKS) serves as a coordination point for ATP. Residues 1476–1496 (KENFEIVALCLTLLANIVIMI) lie within the membrane without spanning it. Residues 1497–2327 (RETHKRQKMV…RWVNAVCGDA (831 aa)) lie on the Cytoplasmic side of the membrane. 2 stretches are compositionally biased toward basic and acidic residues: residues 1524-1533 (KTLDEAEKNP) and 1544-1558 (FRER…RDDV). A disordered region spans residues 1524-1579 (KTLDEAEKNPLETSGASTVGFRERTLPGQKARDDVNSEPAQPTEEQPQAEGPYAGP). O-(5'-phospho-RNA)-tyrosine occurs at positions 1576, 1599, and 1623. Residues 1647 to 1843 (APPTDLQKMV…YCSCVSRSML (197 aa)) form the Peptidase C3 domain. Histidine 1690 serves as the catalytic For protease 3C activity; Proton donor/acceptor. Active-site for protease 3C activity residues include aspartate 1728 and cysteine 1807. The short motif at 1873–1881 (MRKTKLAPT) is the Nuclear localization signal element. Residues 2091–2209 (RNVWDVDYSA…ASDYDLDFEA (119 aa)) form the RdRp catalytic domain. The active-site For RdRp activity is the aspartate 2195.

The protein belongs to the picornaviruses polyprotein family. Interacts with host ISG15. In terms of assembly, interacts (via R-G-D motif) with host ITGAV/ITGB6. Interacts with host MAVS; this interaction inhibits binding of host TRAF3 to MAVS, thereby suppressing interferon-mediated responses. As to quaternary structure, forms homooligomers. Homohexamer. Interacts with host VIM. Interacts with host BECN1. In terms of assembly, interacts with host DCTN3. As to quaternary structure, interacts with RNA-dependent RNA polymerase; this interaction allows 3B-1 to binds 2 polymerases and act as a primer. It also allows the recruitment of the RNA-dependent RNA polymerase to host membranes. Interacts with RNA-dependent RNA polymerase; this interaction allows 3B-2 to act as a primer. In terms of assembly, interacts with RNA-dependent RNA polymerase; this interaction allows 3B-3 to act as a primer. As to quaternary structure, interacts with 3B-1; this interaction allows 3B-1 to binds 2 polymerases and act as a primer. It also allows the recruitment of the RNA-dependent RNA polymerase to host membranes. Interacts with 3B-2; this interaction allows 3B-2 to act as a primer. Interacts with 3B-3; this interaction allows 3B-3 to act as a primer. Removes six residues from its own C-terminus, generating sLb(pro). In terms of processing, specific enzymatic cleavages in vivo by the viral proteases yield a variety of precursors and mature proteins. The polyprotein seems to be cotranslationally cleaved at the 2A/2B junction by a ribosomal skip from one codon to the next without formation of a peptide bond. This process would release the L-P1-2A peptide from the translational complex. Post-translationally, during virion maturation, immature virions are rendered infectious following cleavage of VP0 into VP4 and VP2. This maturation seems to be an autocatalytic event triggered by the presence of RNA in the capsid and is followed by a conformational change of the particle. Myristoylation is required during RNA encapsidation and formation of the mature virus particle. In terms of processing, uridylylated by the polymerase and covalently linked to the 5'-end of genomic RNA. These uridylylated forms act as a nucleotide-peptide primer for the polymerase.

The protein localises to the host nucleus. It localises to the host cytoplasm. Its subcellular location is the virion. It is found in the host endoplasmic reticulum membrane. The protein resides in the host cytoplasmic vesicle membrane. It carries out the reaction Autocatalytically cleaves itself from the polyprotein of the foot-and-mouth disease virus by hydrolysis of a Lys-|-Gly bond, but then cleaves host cell initiation factor eIF-4G at bonds -Gly-|-Arg- and -Lys-|-Arg-.. It catalyses the reaction a ribonucleoside 5'-triphosphate + H2O = a ribonucleoside 5'-diphosphate + phosphate + H(+). The catalysed reaction is RNA(n) + a ribonucleoside 5'-triphosphate = RNA(n+1) + diphosphate. The enzyme catalyses Selective cleavage of Gln-|-Gly bond in the poliovirus polyprotein. In other picornavirus reactions Glu may be substituted for Gln, and Ser or Thr for Gly.. Its function is as follows. Autocatalytically cleaves itself from the polyprotein at the L/VP0 junction. Also cleaves the host translation initiation factors EIF4G1 and EIF4G3, in order to shut off the capped cellular mRNA transcription. Plays a role in counteracting host innate antiviral response using diverse mechanisms. Possesses a deubiquitinase activity acting on both 'Lys-48' and 'Lys-63'-linked polyubiquitin chains. In turn, inhibits the ubiquitination and subsequent activation of key signaling molecules of type I IFN response such as host RIGI, TBK1, TRAF3 and TRAF6. Inhibits host NF-kappa-B activity by inducing a decrease in RELA mRNA levels. Cleaves a peptide bond in the C-terminus of host ISG15, resulting in the damaging of this modifier that can no longer be attached to target proteins. Also cleaves host G3BP1 and G3BP2 in order to inhibit cytoplasmic stress granules assembly. Functionally, lies on the inner surface of the capsid shell. After binding to the host receptor, the capsid undergoes conformational changes. Capsid protein VP4 is released, capsid protein VP1 N-terminus is externalized, and together, they shape a pore in the host membrane through which the viral genome is translocated into the host cell cytoplasm. After genome has been released, the channel shrinks. Forms an icosahedral capsid of pseudo T=3 symmetry with capsid proteins VP1 and VP3. The capsid is composed of 60 copies of each capsid protein organized in the form of twelve pentamers and encloses the viral positive strand RNA genome. Upon acidifcation in the endosome, dissociates into pentamers. In terms of biological role, forms an icosahedral capsid of pseudo T=3 symmetry with capsid proteins VP0 and VP3. The capsid is composed of 60 copies of each capsid protein organized in the form of twelve pentamers and encloses the viral positive strand RNA genome. Upon acidifcation in the endosome, dissociates into pentamers. Its function is as follows. Forms an icosahedral capsid of pseudo T=3 symmetry with capsid proteins VP2 and VP3. The capsid is composed of 60 copies of each capsid protein organized in the form of twelve pentamers and encloses the viral positive strand RNA genome. Mediates cell entry by attachment to an integrin receptor, usually host ITGAV/ITGB6. In addition, targets host MAVS to suppress type I IFN pathway. Upon acidifcation in the endosome, dissociates into pentamers. Functionally, mediates self-processing of the polyprotein by a translational effect termed 'ribosome skipping'. Mechanistically, 2A-mediated cleavage occurs between the C-terminal glycine and the proline of the downstream protein 2B. In the case of foot-and-mouth disease virus, the 2A oligopeptide is post-translationally 'trimmed' from the C-terminus of the upstream protein 1D by 3C proteinase. Plays an essential role in the virus replication cycle by acting as a viroporin. Creates a pore in the host endoplasmic reticulum and as a consequence releases Ca2+ in the cytoplasm of infected cell. In turn, high levels of cytoplasmic calcium may trigger membrane trafficking and transport of viral ER-associated proteins to viroplasms, sites of viral genome replication. In terms of biological role, associates with and induces structural rearrangements of intracellular membranes. Triggers host autophagy by interacting with host BECN1 and thereby promotes viral replication. Participates in viral replication and interacts with host DHX9. Displays RNA-binding, nucleotide binding and NTPase activities. May play a role in virion morphogenesis and viral RNA encapsidation by interacting with the capsid protein VP3. Its function is as follows. Plays important roles in virus replication, virulence and host range. Cooperates with host DDX56 to inhibit IRF3 nuclear translocation and subsequent type I interferon production. Functionally, covalently linked to the 5'-end of both the positive-strand and negative-strand genomic RNAs. Acts as a genome-linked replication primer. Cysteine protease that generates mature viral proteins from the precursor polyprotein. In addition to its proteolytic activity, binds to viral RNA and thus influences viral genome replication. RNA and substrate bind cooperatively to the protease. In terms of biological role, RNA-directed RNA polymerase 3D-POL replicates genomic and antigenomic RNA by recognizing replications specific signals. Covalently attaches UMP to a tyrosine of VPg, which is used to prime RNA synthesis. The positive stranded RNA genome is first replicated at virus induced membranous vesicles, creating a dsRNA genomic replication form. This dsRNA is then used as template to synthesize positive stranded RNA genomes. ss(+)RNA genomes are either translated, replicated or encapsidated. In Bos taurus (Bovine), this protein is Genome polyprotein.